Here is a 235-residue protein sequence, read N- to C-terminus: Adenosine 5'-phosphosulfate reductase (235 aa).

4 residues coordinate [4Fe-4S] cluster: Cys-121, Cys-122, Cys-204, and Cys-207. The active-site Nucleophile; cysteine thiosulfonate intermediate is the Cys-230.

This sequence belongs to the PAPS reductase family. CysH subfamily. The cofactor is [4Fe-4S] cluster.

The protein localises to the cytoplasm. The catalysed reaction is [thioredoxin]-disulfide + sulfite + AMP + 2 H(+) = adenosine 5'-phosphosulfate + [thioredoxin]-dithiol. The protein operates within sulfur metabolism; hydrogen sulfide biosynthesis; sulfite from sulfate. Functionally, catalyzes the formation of sulfite from adenosine 5'-phosphosulfate (APS) using thioredoxin as an electron donor. In Geobacillus kaustophilus (strain HTA426), this protein is Adenosine 5'-phosphosulfate reductase.